Reading from the N-terminus, the 1025-residue chain is DNA ligase 4 (1025 aa).

The tract at residues 1-36 is disordered; the sequence is MMQPTPAPSSAPGSPQRTQAEPEMETPSYPQPPQNV. Positions 289, 291, 292, 296, 349, 387, 447, 452, 469, and 471 each coordinate ATP. Residue Lys291 is the N6-AMP-lysine intermediate of the active site. Residue Glu349 participates in Mg(2+) binding. Residue Glu447 coordinates Mg(2+). Residues 667–763 enclose the BRCT 1 domain; it reads VKTDIFNGMK…EPAPFKKKYF (97 aa). The disordered stretch occupies residues 773–904; that stretch reads ADEYNEDDGE…TTPDVDGDVK (132 aa). Composition is skewed to acidic residues over residues 775–785 and 806–816; these read EYNEDDGEEEG and SETEDEDEEQA. The span at 817–838 shows a compositional bias: basic and acidic residues; that stretch reads PEIKEEQDGELHEWLKVDDRKS. Acidic residues predominate over residues 845–870; sequence DEEDSVTEDDSDNADVADEEEPDLDD. Basic and acidic residues predominate over residues 891–904; that stretch reads RHRETTPDVDGDVK. Residues 915-1025 form the BRCT 2 domain; it reads DPDVIFKHLC…TLLDEEEFAP (111 aa).

The protein belongs to the ATP-dependent DNA ligase family. Requires Mg(2+) as cofactor.

It localises to the nucleus. The enzyme catalyses ATP + (deoxyribonucleotide)n-3'-hydroxyl + 5'-phospho-(deoxyribonucleotide)m = (deoxyribonucleotide)n+m + AMP + diphosphate.. In terms of biological role, DNA ligase involved in DNA non-homologous end joining (NHEJ); required for double-strand break (DSB) repair. The polypeptide is DNA ligase 4 (LIG4) (Coprinopsis cinerea (Inky cap fungus)).